The chain runs to 592 residues: Medium-chain-fatty-acid--[acyl-carrier-protein] ligase JamA (592 aa).

It belongs to the ATP-dependent AMP-binding enzyme family.

It carries out the reaction a medium-chain fatty acid + holo-[ACP] + ATP = a medium-chain fatty acyl-[ACP] + AMP + diphosphate. It catalyses the reaction a medium-chain fatty acid + ATP + H(+) = a medium-chain fatty acyl-AMP + diphosphate. The enzyme catalyses a medium-chain fatty acyl-AMP + holo-[ACP] = a medium-chain fatty acyl-[ACP] + AMP + H(+). Ligase involved in the biosynthesis of jamaicamides, which show sodium channel blocking activity and fish toxicity. Initiates jamaicamide biosynthesis by the activation of the starter unit, 5-hexenoic acid, followed by the loading of the activated 5-hexenoic acid onto the acyl carrier protein JamC. In vitro, can also use 5-hexynoic acid, heptanoic acid, butanoic acid, hexanoic acid and benzoic acid. The chain is Medium-chain-fatty-acid--[acyl-carrier-protein] ligase JamA from Moorena producens (strain JHB).